We begin with the raw amino-acid sequence, 2137 residues long: Pecanex-like protein 2 (2137 aa).

2 helical membrane passes run 34–54 and 57–77; these read CHLY…LAFP and AIIV…IKLV. Disordered stretches follow at residues 92-163, 225-251, 402-530, and 545-572; these read QQKP…LELS, NGKG…VDKG, EKTS…HARV, and SAEI…QMPN. Basic and acidic residues predominate over residues 96–114; that stretch reads SRKEEKPNKDKEAKGEHIT. The segment covering 116 to 125 has biased composition (polar residues); the sequence is HRNPSNNRQI. N136 carries an N-linked (GlcNAc...) asparagine glycan. Positions 146–156 are enriched in polar residues; it reads SRGQSITSHHS. N449 carries an N-linked (GlcNAc...) asparagine glycan. Residues 479–490 show a composition bias toward basic and acidic residues; sequence IKDHSSSSREPW. Residues 510–520 are compositionally biased toward polar residues; the sequence is GQTNLDPSSCK. N-linked (GlcNAc...) asparagine glycosylation is found at N550, N572, N587, N598, and N613. Residues 593 to 602 show a composition bias toward polar residues; it reads ASSQLNGSAE. Residues 593–612 are disordered; it reads ASSQLNGSAEQNEESGLLRD. 2 disordered regions span residues 621-655 and 740-763; these read EILE…CTQP and AREM…SGDP. Positions 630–655 are enriched in polar residues; sequence GHSSKQGKPDLQSQDHTSTGPACTQP. Residues 746 to 760 show a composition bias toward low complexity; that stretch reads SSSSTTTSESQDPSS. Transmembrane regions (helical) follow at residues 844 to 864, 868 to 888, 901 to 921, 952 to 972, 983 to 1003, 1029 to 1049, 1099 to 1119, 1124 to 1144, 1193 to 1213, 1237 to 1257, 1265 to 1285, 1302 to 1322, and 1324 to 1344; these read LAIL…SQGF, MWVL…LKSV, QIIT…ILLL, YLIV…FPQI, IDML…VYSV, HIPA…YHLS, LIVC…TVFL, FLSI…HYVL, YILY…LISN, SFCN…FFHF, SFLL…DLLH, GSSF…MLFF, and TIAT…VIFI. N-linked (GlcNAc...) asparagine glycosylation is found at N1412, N1553, and N1818. Positions 1876 to 1958 are disordered; sequence RQHSGGNIED…RPPMLSSSGP (83 aa). Composition is skewed to polar residues over residues 1901–1910, 1920–1929, and 1937–1958; these read SGGSQESSAE, GVSSCEGTQR, and SQSV…SSGP. Residue N2054 is glycosylated (N-linked (GlcNAc...) asparagine).

Belongs to the pecanex family.

It localises to the membrane. Functionally, may play a role in tumorigenesis of colorectal carcinomas with high microsatellite instability (MSI-H). In Homo sapiens (Human), this protein is Pecanex-like protein 2.